The primary structure comprises 372 residues: Non-structural protein NS2 (372 aa).

The tract at residues 259–326 is disordered; the sequence is NQIEKQHTTH…QESEPESPSF (68 aa). A compositionally biased stretch (low complexity) spans 299–309; sequence TETTSTSSSHH.

The sequence is that of Non-structural protein NS2 (NS) from Aedes albopictus (Asian tiger mosquito).